The following is a 121-amino-acid chain: Small ribosomal subunit protein uS13 (121 aa).

The interval 93–121 is disordered; it reads RGLPVRGQNTKNNARTRKGPRRTVANKKK. Residues 106–121 are compositionally biased toward basic residues; the sequence is ARTRKGPRRTVANKKK.

This sequence belongs to the universal ribosomal protein uS13 family. Part of the 30S ribosomal subunit. Forms a loose heterodimer with protein S19. Forms two bridges to the 50S subunit in the 70S ribosome.

Its function is as follows. Located at the top of the head of the 30S subunit, it contacts several helices of the 16S rRNA. In the 70S ribosome it contacts the 23S rRNA (bridge B1a) and protein L5 of the 50S subunit (bridge B1b), connecting the 2 subunits; these bridges are implicated in subunit movement. Contacts the tRNAs in the A and P-sites. The chain is Small ribosomal subunit protein uS13 from Bacillus pumilus (strain SAFR-032).